We begin with the raw amino-acid sequence, 243 residues long: Probable transcriptional regulatory protein Smal_3128 (243 aa).

The protein belongs to the TACO1 family.

The protein localises to the cytoplasm. The sequence is that of Probable transcriptional regulatory protein Smal_3128 from Stenotrophomonas maltophilia (strain R551-3).